The following is a 275-amino-acid chain: Glucan endo-1,3-beta-glucosidase, acidic isoform PR-N (275 aa).

The active-site Nucleophile is the E196.

It belongs to the glycosyl hydrolase 17 family. The N-terminus is blocked.

Its subcellular location is the secreted. The protein resides in the extracellular space. The enzyme catalyses Hydrolysis of (1-&gt;3)-beta-D-glucosidic linkages in (1-&gt;3)-beta-D-glucans.. Its function is as follows. Implicated in the defense of plants against pathogens. The protein is Glucan endo-1,3-beta-glucosidase, acidic isoform PR-N (PRN) of Nicotiana tabacum (Common tobacco).